An 816-amino-acid chain; its full sequence is Protein kinase C-binding protein NELL2 (816 aa).

The first 21 residues, 1–21, serve as a signal peptide directing secretion; the sequence is MESRVLLRTFCLIFGLGAVWG. N-linked (GlcNAc...) asparagine glycans are attached at residues asparagine 53, asparagine 225, asparagine 293, and asparagine 298. A Laminin G-like domain is found at 64–228; sequence PRSIKASTAT…AQCPDLNRTC (165 aa). In terms of domain architecture, VWFC 1 spans 272-331; it reads RTCTMKGTTYREFESWIDGCKNCTCLNGTIQCETLICPNPDCPLKSALAYVDGKCCKECK. Residues 397–439 form the EGF-like 1 domain; the sequence is GYDFCSERHNCMENSICRNLNDRAVCSCRDGFRALREDNAYCE. 3 disulfide bridges follow: cysteine 401–cysteine 413, cysteine 407–cysteine 422, and cysteine 424–cysteine 438. Ca(2+)-binding residues include aspartate 440, isoleucine 441, and glutamate 443. Positions 440–481 constitute an EGF-like 2; calcium-binding domain; sequence DIDECAEGRHYCRENTMCVNTPGSFMCICKTGYIRIDDYSCT. Disulfide bonds link cysteine 444–cysteine 457, cysteine 451–cysteine 466, cysteine 468–cysteine 480, cysteine 486–cysteine 499, cysteine 493–cysteine 508, cysteine 510–cysteine 521, cysteine 525–cysteine 535, cysteine 529–cysteine 541, and cysteine 543–cysteine 552. Ca(2+) is bound by residues asparagine 459, threonine 460, and serine 463. In terms of domain architecture, EGF-like 3; calcium-binding spans 482-522; the sequence is EHDECITNQHNCDENALCFNTVGGHNCVCKPGYTGNGTTCK. The N-linked (GlcNAc...) asparagine glycan is linked to asparagine 517. The region spanning 523–553 is the EGF-like 4 domain; the sequence is AFCKDGCRNGGACIAANVCACPQGFTGPSCE. A glycan (O-linked (GlcNAc...) threonine) is linked at threonine 548. The Ca(2+) site is built by aspartate 555, isoleucine 556, and glutamate 558. Residues 555–601 enclose the EGF-like 5; calcium-binding domain; the sequence is DIDECSDGFVQCDSRANCINLPGWYHCECRDGYHDNGMFSPSGESCE. Disulfide bonds link cysteine 559-cysteine 572, cysteine 566-cysteine 581, and cysteine 583-cysteine 600. Residues asparagine 574, leucine 575, and tryptophan 578 each coordinate Ca(2+). Residues aspartate 602, isoleucine 603, and glutamate 605 each coordinate Ca(2+). Residues 602-637 form the EGF-like 6; calcium-binding domain; the sequence is DIDECGTGRHSCANDTICFNLDGGYDCRCPHGKNCT. 3 disulfides stabilise this stretch: cysteine 606–cysteine 619, cysteine 613–cysteine 628, and cysteine 630–cysteine 636. Asparagine 615 is a glycosylation site (N-linked (GlcNAc...) asparagine). The Ca(2+) site is built by asparagine 621, leucine 622, and glycine 625. N-linked (GlcNAc...) asparagine glycosylation occurs at asparagine 635. VWFC domains are found at residues 638–693 and 698–756; these read GDCI…PECD and SQCL…PRCV.

In terms of assembly, homotrimer. Binds to PRKCB. Interacts with NICOL1; this interaction triggers epididymal differentiation. Interacts (via the EGF domains) with ROBO3 (via Fibronectin type-III 1 domain) with a 3:3 stoichiometry; this interaction promotes oligomerization of ROBO3 resulting in the repulsion of commissural axons in the midline.

Its subcellular location is the secreted. Functionally, plays multiple roles in neural tissues, regulates neuronal proliferation, survival, differentiation, polarization, as well as axon guidance and synaptic functions. Plays an important role in axon development during neuronal differentiation through the MAPK intracellular signaling pathway. Via binding to its receptor ROBO3, plays a role in axon guidance, functioning as a repulsive axon guidance cue that contributes to commissural axon guidance to the midline. Required for neuron survival through the modulation of MAPK signaling pathways too. Involved in the regulation of hypothalamic GNRH secretion and the control of puberty. Its function is as follows. Epididymal-secreted protein that signals through a ROS1-pathway to regulate the epididymal initial segment (IS) maturation, sperm maturation and male fertility. The polypeptide is Protein kinase C-binding protein NELL2 (Homo sapiens (Human)).